Here is a 369-residue protein sequence, read N- to C-terminus: Phospho-N-acetylmuramoyl-pentapeptide-transferase (369 aa).

Helical transmembrane passes span 30 to 50 (LAIF…IRWM), 74 to 94 (GTPT…TLLW), 97 to 117 (LSNP…LLGF), 136 to 156 (IRLA…IVFA), 177 to 197 (YFVD…VGAA), 208 to 228 (GLAT…AYLV), 244 to 264 (GVGE…GFLW), 272 to 292 (IFMG…VAVA), 297 to 317 (IVLA…IIQV), and 346 to 366 (TVVI…LATL).

This sequence belongs to the glycosyltransferase 4 family. MraY subfamily. Requires Mg(2+) as cofactor.

The protein localises to the cell inner membrane. The catalysed reaction is UDP-N-acetyl-alpha-D-muramoyl-L-alanyl-gamma-D-glutamyl-meso-2,6-diaminopimeloyl-D-alanyl-D-alanine + di-trans,octa-cis-undecaprenyl phosphate = di-trans,octa-cis-undecaprenyl diphospho-N-acetyl-alpha-D-muramoyl-L-alanyl-D-glutamyl-meso-2,6-diaminopimeloyl-D-alanyl-D-alanine + UMP. It functions in the pathway cell wall biogenesis; peptidoglycan biosynthesis. Its function is as follows. Catalyzes the initial step of the lipid cycle reactions in the biosynthesis of the cell wall peptidoglycan: transfers peptidoglycan precursor phospho-MurNAc-pentapeptide from UDP-MurNAc-pentapeptide onto the lipid carrier undecaprenyl phosphate, yielding undecaprenyl-pyrophosphoryl-MurNAc-pentapeptide, known as lipid I. In Phenylobacterium zucineum (strain HLK1), this protein is Phospho-N-acetylmuramoyl-pentapeptide-transferase.